We begin with the raw amino-acid sequence, 155 residues long: MVCTPVEKSPNLLPTTSKANSKAGLAPLLLTVVELIRQLMEAQVIRRMEQDCLSESELEQASESLQKLEEQVLNLCHIFEIEPADLNINLGDVGTLLPSPGSYYPGEIGNKPSVLELLDRLLNTGIVVDGEIDLGLAQLNLIHAKLRLVLTSRPL.

The protein belongs to the gas vesicle GvpK family.

The protein resides in the gas vesicle. Might be involved in nucleating gas vesicle formation. Gas vesicles (GV) are hollow, gas filled proteinaceous nanostructures. During planktonic growth they allow positioning of the organism at a favorable depth for light or nutrient acquisition. Its function is as follows. Cluster expression in E.coli (gvpA1-gvpA2-gvpC-gvpN-gvpJ-gvpK-gvpF-gvpG-gvpV-gvpW) allows cells to float and produces irregularly shaped gas vesicles. The polypeptide is Gas vesicle protein K (Nostoc sp. (strain PCC 7120 / SAG 25.82 / UTEX 2576)).